We begin with the raw amino-acid sequence, 295 residues long: MQNDAFKSKVLIESLPYFRQFSGETVVIKYGGNAMIDESLKQAFALNIVLLKYVGVNPVVVHGGGPQIGRMLQQLNIPTNFREGLRVTDDATMDVVEMVLVGKVNKQIVNLLNLSGAKAVGLSGKDGQLIRARQMEMVISKEAQAPEIIDLGKVGEVTGVETKLLHSLQRDGFIPVIAPVGVDENGETYNINADLVAGAVAGALGAKRLLLLTDVPGILDKDGRLISSLDTARTMQLFEDGTLKGGMLPKVKCCLEALEDGVEKAMIIDGRIENCVLLELFTDHGIGTEITRACS.

Residues Gly-64 to Gly-65, Arg-86, and Asn-190 each bind substrate.

It belongs to the acetylglutamate kinase family. ArgB subfamily.

The protein localises to the cytoplasm. It carries out the reaction N-acetyl-L-glutamate + ATP = N-acetyl-L-glutamyl 5-phosphate + ADP. Its pathway is amino-acid biosynthesis; L-arginine biosynthesis; N(2)-acetyl-L-ornithine from L-glutamate: step 2/4. In terms of biological role, catalyzes the ATP-dependent phosphorylation of N-acetyl-L-glutamate. This is Acetylglutamate kinase from Oleidesulfovibrio alaskensis (strain ATCC BAA-1058 / DSM 17464 / G20) (Desulfovibrio alaskensis).